A 635-amino-acid polypeptide reads, in one-letter code: 1-deoxy-D-xylulose-5-phosphate synthase (635 aa).

Thiamine diphosphate contacts are provided by residues His79 and 120–122; that span reads GHS. Asp151 is a Mg(2+) binding site. Thiamine diphosphate-binding positions include 152 to 153, Asn182, Tyr291, and Glu372; that span reads GA. Residue Asn182 participates in Mg(2+) binding.

It belongs to the transketolase family. DXPS subfamily. As to quaternary structure, homodimer. Mg(2+) serves as cofactor. Thiamine diphosphate is required as a cofactor.

The enzyme catalyses D-glyceraldehyde 3-phosphate + pyruvate + H(+) = 1-deoxy-D-xylulose 5-phosphate + CO2. It participates in metabolic intermediate biosynthesis; 1-deoxy-D-xylulose 5-phosphate biosynthesis; 1-deoxy-D-xylulose 5-phosphate from D-glyceraldehyde 3-phosphate and pyruvate: step 1/1. Functionally, catalyzes the acyloin condensation reaction between C atoms 2 and 3 of pyruvate and glyceraldehyde 3-phosphate to yield 1-deoxy-D-xylulose-5-phosphate (DXP). This is 1-deoxy-D-xylulose-5-phosphate synthase from Xylella fastidiosa (strain M12).